The primary structure comprises 491 residues: 3-phosphoinositide-dependent protein kinase 1 (491 aa).

One can recognise a Protein kinase domain in the interval Phe44 to Phe311. ATP contacts are provided by residues Ser54–Ser56 and Lys73. Positions Met75–Met119 are PIF-pocket. The interval Lys77–Gln112 is PIF-binding. ATP contacts are provided by residues Glu122 to Cys124 and Glu128. Catalysis depends on Asp167, which acts as the Proton acceptor. An ATP-binding site is contributed by Glu171. Ser177 carries the post-translational modification Phosphoserine. Asp185 provides a ligand contact to ATP. The segment at Asp185 to Glu222 is activation loop. A Phosphothreonine; by autocatalysis modification is found at Thr211. A phosphoserine mark is found at Ser276 and Ser337. The segment at Ser321–Ile377 is disordered. Positions Ser365–Ser376 are enriched in low complexity. Ser382 carries the post-translational modification Phosphoserine. Residues Phe386–Arg491 enclose the PH domain.

The protein belongs to the protein kinase superfamily. AGC Ser/Thr protein kinase family. PDPK1 subfamily. Interacts with AGC1-5 and AGC1-7. Interacts with the C-terminal PIF domain of the protein kinases D6PK/AGC1-1, OXI1/AGC2-1 and PID. In terms of processing, phosphorylation on Thr-211 in the activation loop is required for full activity. PDK1 itself can autophosphorylate Thr-211, leading to its own activation. As to expression, ubiquitous.

The protein resides in the cytoplasm. Its subcellular location is the membrane. It carries out the reaction L-seryl-[protein] + ATP = O-phospho-L-seryl-[protein] + ADP + H(+). The catalysed reaction is L-threonyl-[protein] + ATP = O-phospho-L-threonyl-[protein] + ADP + H(+). Activated by phosphatidic acid (PA) and in response to the fungal elicitor xylanase. Functionally, may couple lipid signals to the activation-loop phosphorylation of several protein kinases of the so-called AGC kinase family. Interacts via its pleckstrin homology domain with phosphatidic acid, PtdIns3P and PtdIns(3,4)P2 and to a lesser extent with PtdIns(4,5)P2 and PtdIns4P. May play a general role in signaling processes controlling the pathogen/stress response, polar auxin transport and development. Transphosphorylates the AGC protein kinases OXI1/AGC2-1, PK1/S6K1, PK19/S6K2 and PID resulting in their activation. This is 3-phosphoinositide-dependent protein kinase 1 (PDPK1) from Arabidopsis thaliana (Mouse-ear cress).